The primary structure comprises 265 residues: Cell division protein DivIB (265 aa).

The Cytoplasmic portion of the chain corresponds to 1–33; the sequence is MRMELKMMGNVNKSNKTNEYILRRHKKKRKKKL. The chain crosses the membrane as a helical span at residues 34 to 54; the sequence is IIFSILLISILVTLCFKHPFF. One can recognise a POTRA domain in the interval 54 to 122; sequence FNVKIVEVKD…NKIVIHIKER (69 aa). Topologically, residues 55-265 are extracellular; the sequence is NVKIVEVKDN…FKGNPVVFIK (211 aa).

The protein belongs to the FtsQ/DivIB family. DivIB subfamily.

The protein localises to the cell membrane. In terms of biological role, cell division protein that may be involved in stabilizing or promoting the assembly of the division complex. This chain is Cell division protein DivIB, found in Clostridium tetani (strain Massachusetts / E88).